The chain runs to 147 residues: Large ribosomal subunit protein uL13 (147 aa).

This sequence belongs to the universal ribosomal protein uL13 family. As to quaternary structure, part of the 50S ribosomal subunit.

Functionally, this protein is one of the early assembly proteins of the 50S ribosomal subunit, although it is not seen to bind rRNA by itself. It is important during the early stages of 50S assembly. The protein is Large ribosomal subunit protein uL13 of Rhodococcus erythropolis (strain PR4 / NBRC 100887).